A 320-amino-acid polypeptide reads, in one-letter code: Putative olfactory receptor 2W5 pseudogene (320 aa).

The N-linked (GlcNAc...) asparagine glycan is linked to N5. Helical transmembrane passes span V30–V50, P58–A78, V98–M118, and L140–C160. A disulfide bridge connects residues C97 and C179. The segment at L267–L320 is disordered. Over residues L290–T304 the composition is skewed to basic and acidic residues.

Belongs to the G-protein coupled receptor 1 family.

It is found in the cell membrane. In terms of biological role, odorant receptor. This chain is Putative olfactory receptor 2W5 pseudogene, found in Homo sapiens (Human).